A 493-amino-acid polypeptide reads, in one-letter code: Dipeptide permease D (493 aa).

The Cytoplasmic segment spans residues 1–13 (MNKHASQPRAIYY). A helical membrane pass occupies residues 14-34 (VVALQIWEYFSFYGMRALLIL). Topologically, residues 35–48 (YLTNQLKYNDTHAY) are periplasmic. A helical membrane pass occupies residues 49–69 (ELFSAYCSLVYVTPILGGFLA). The Cytoplasmic portion of the chain corresponds to 70–77 (DKVLGNRM). Residues 78-98 (AVMLGALLMAIGHVVLGASEI) traverse the membrane as a helical segment. The Periplasmic segment spans residues 99–100 (HP). Residues 101 to 121 (SFLYLSLAIIVCGYGLFKSNV) traverse the membrane as a helical segment. The Cytoplasmic portion of the chain corresponds to 122–137 (SCLLGELYEPTDPRRD). A helical transmembrane segment spans residues 138–158 (GGFSLMYAAGNVGSIIAPIAC). Topologically, residues 159-166 (GYAQEEYS) are periplasmic. The chain crosses the membrane as a helical span at residues 167–187 (WAMGFGLAAVGMIAGLVIFLC). The Cytoplasmic portion of the chain corresponds to 188–211 (GNRHFTHTRGVNKKVLRATNFLLP). Residues 212–232 (NWGWLLVLLVATPALITVLFW) form a helical membrane-spanning segment. Topologically, residues 233–234 (KE) are periplasmic. The chain crosses the membrane as a helical span at residues 235-255 (WSVYALIVATIIGLGVLAKIY). The Cytoplasmic portion of the chain corresponds to 256-268 (RKAENQKQRKELR). Residues 269 to 289 (LIVTLTFFSMLFWAFAQQGGS) form a helical membrane-spanning segment. Topologically, residues 290–311 (SISLYIDRFVNRDMFGYTVPTA) are periplasmic. Residues 312-332 (MFQSINAFAVMLCGVFLAWVV) form a helical membrane-spanning segment. Residues 333–343 (KESVAGNRTVR) are Cytoplasmic-facing. The helical transmembrane segment at 344-364 (IWGKFALGLGLMSAGFCILTL) threads the bilayer. Over 365 to 378 (SARWSAMYGHSSLP) the chain is Periplasmic. Residues 379 to 399 (LMVLGLAVMGFAELFIDPVAM) form a helical membrane-spanning segment. Residues 400-412 (SQITRIEIPGVTG) lie on the Cytoplasmic side of the membrane. The chain crosses the membrane as a helical span at residues 413-433 (VLTGIYMLLSGAIANYLAGVI). Residues 434 to 461 (ADQTSQASFDASGAINYSINAYIEVFDQ) are Periplasmic-facing. Residues 462 to 482 (ITWGALACVGVVLMIWLYQAL) traverse the membrane as a helical segment. At 483–493 (KFRNRALALES) the chain is on the cytoplasmic side.

Belongs to the major facilitator superfamily. Proton-dependent oligopeptide transporter (POT/PTR) (TC 2.A.17) family. DtpD subfamily. In terms of assembly, monomer in solution. Exhibits a doughnut-like shape with a central, shallow depression and has a diameter of 8 nm.

It is found in the cell inner membrane. Functionally, probable proton-dependent permease that transports dipeptides. The protein is Dipeptide permease D (dtpD) of Escherichia coli O157:H7.